We begin with the raw amino-acid sequence, 305 residues long: Tyrosine recombinase XerC (305 aa).

The region spanning methionine 1 to valine 93 is the Core-binding (CB) domain. Residues arginine 114 to aspartate 294 enclose the Tyr recombinase domain. Active-site residues include arginine 155, lysine 179, histidine 246, arginine 249, and histidine 272. Tyrosine 281 functions as the O-(3'-phospho-DNA)-tyrosine intermediate in the catalytic mechanism.

The protein belongs to the 'phage' integrase family. XerC subfamily. In terms of assembly, forms a cyclic heterotetrameric complex composed of two molecules of XerC and two molecules of XerD.

It is found in the cytoplasm. Functionally, site-specific tyrosine recombinase, which acts by catalyzing the cutting and rejoining of the recombining DNA molecules. The XerC-XerD complex is essential to convert dimers of the bacterial chromosome into monomers to permit their segregation at cell division. It also contributes to the segregational stability of plasmids. The sequence is that of Tyrosine recombinase XerC from Neisseria meningitidis serogroup C / serotype 2a (strain ATCC 700532 / DSM 15464 / FAM18).